The primary structure comprises 1943 residues: Beta-L-arabinobiosidase (1943 aa).

A signal peptide (tat-type signal) is located at residues 1 to 32 (MHHSTRKRWLASIGAVAAVATLATGGAVTAQA). F5/8 type C domains follow at residues 892 to 1049 (TNVD…AYNT) and 1142 to 1302 (SKEI…AYAI). The 97-residue stretch at 1061–1157 (TPQVDAYVSS…HGIPSDGTVN (97 aa)) folds into the PKD domain. 3 FIVAR domains span residues 1678–1716 (ANGL…EQVA), 1746–1790 (DAAK…AAVQ), and 1823–1864 (QAKK…VDAA). Residues 1875–1906 (TKVEQKPGSQQPGVTDTDKDDKDNKGDRVPPT) are disordered. Residues 1890-1902 (DTDKDDKDNKGDR) show a composition bias toward basic and acidic residues. A helical membrane pass occupies residues 1908–1928 (AAVSVVAAAAVLLTAAGVTIL).

The protein belongs to the glycosyl hydrolase 121 family. In terms of processing, predicted to be exported by the Tat system. The position of the signal peptide cleavage has not been experimentally proven.

Its subcellular location is the membrane. It catalyses the reaction 4-O-(beta-L-arabinofuranosyl-(1-&gt;2)-beta-L-arabinofuranosyl-(1-&gt;2)-beta-L-arabinofuranosyl)-(2S,4S)-4-hydroxyproline + H2O = 4-O-(beta-L-arabinofuranosyl)-(2S,4S)-4-hydroxyproline + beta-L-arabinofuranosyl-(1-&gt;2)-beta-L-arabinofuranose. In terms of biological role, beta-L-arabinobiosidase that removes L-arabinofuranose-beta-1,2-L-arabinofuranose disaccharide from various substrates such as carrot extensin and potato lectin. Also acts on L-arabinofuranose (Ara)-beta-1,2-Ara-beta-1,2-Ara-beta-Hyp (Ara(3)-Hyp) but not on Ara-beta-1,3-Ara-beta-1,2-Ara-beta-1,2-Ara-beta--Hyp (Ara(4)-Hyp) or Ara-beta-1,2-Ara-beta-Hyp (Ara(2)-Hyp), suggesting a specificity for unmodified Ara(3)-Hyp substrate. In the presence of 1-alkanols, shows transglycosylation activity, retaining the anomeric configuration of the arabinofuranose residue. The chain is Beta-L-arabinobiosidase (hypBA2) from Bifidobacterium longum subsp. longum (strain ATCC 15707 / DSM 20219 / JCM 1217 / NCTC 11818 / E194b).